A 242-amino-acid chain; its full sequence is Adenylate kinase 1 (242 aa).

ATP contacts are provided by residues 38 to 43 (GSGKGT) and G42. Residues 58 to 87 (STGDLLREAAEKKTELGLKIKNIINEGKLV) form an NMP region. AMP-binding positions include T59, R64, 85–87 (KLV), G113, 113–116 (GYPR), and Q120. Residues 154–191 (GRLIHKPSGRIYHKIFNPPKVPFRDDVTNEPLIQREDD) form an LID region. ATP-binding residues include R155 and Y165. R199 is a binding site for AMP. A229 is a binding site for ATP.

It belongs to the adenylate kinase family.

It is found in the cytoplasm. The enzyme catalyses AMP + ATP = 2 ADP. With respect to regulation, inhibited by the dinucleoside pentaphosphate compound P1,P5-di(adenosine-5') pentaphosphate (AP5A). Its function is as follows. Catalyzes the reversible transfer of the terminal phosphate group between ATP and AMP. Has very low activity with CTP, GTP, ITP and UTP and no activity with GMP, CMP, UMP or IMP in vitro. This is Adenylate kinase 1 from Plasmodium falciparum (isolate 3D7).